Reading from the N-terminus, the 74-residue chain is uncharacterized protein (74 aa).

This is an uncharacterized protein from Methanocaldococcus jannaschii (strain ATCC 43067 / DSM 2661 / JAL-1 / JCM 10045 / NBRC 100440) (Methanococcus jannaschii).